Here is a 350-residue protein sequence, read N- to C-terminus: Secreted effector protein PipB2 (350 aa).

4 consecutive Pentapeptide repeat domains span residues 162–201, 202–241, 247–286, and 287–326; these read ANLTAENLCDADLSGANLEGAVLFMADCEGANFKGANLSG, TSLGDSNFKNACLEDGIMCGATLDHANLTGANLQHASLLG, CNCSGANMDHTNLSGATLIRADMSGATLQGATIMAAIMED, and AVLTRANLRKASFISTNLDGADLAEANLNNTCFKDCTLTH.

Interacts with the host kinesin light chain (KLC), a subunit of the kinesin-1 motor complex.

It localises to the secreted. It is found in the host membrane. Functionally, effector proteins function to alter host cell physiology and promote bacterial survival in host tissues. Involved in the reorganization of late endosome/lysosome (LE/Lys) compartments in mammalian cells. Necessary and sufficient to link kinesin-1 onto the Salmonella-containing vacuole (SCV) membrane. Required for centrifugal extension of lysosomal glycoprotein-rich membrane tubules, known as Salmonella-induced filaments (Sifs), away from the SCV and toward the cell periphery. Required for virulence, but not for intracellular survival and replication in phagocytic cells. This is Secreted effector protein PipB2 (pipB2) from Salmonella paratyphi A (strain ATCC 9150 / SARB42).